Consider the following 499-residue polypeptide: Alpha-L-arabinofuranosidase B (499 aa).

The N-terminal stretch at 1–18 (MFSRRNLVALGLAATVSA) is a signal peptide. Residues Asn-83 and Asn-202 are each glycosylated (N-linked (GlcNAc...) asparagine).

This sequence belongs to the glycosyl hydrolase 54 family.

The enzyme catalyses Hydrolysis of terminal non-reducing alpha-L-arabinofuranoside residues in alpha-L-arabinosides.. The protein operates within glycan metabolism; L-arabinan degradation. In terms of biological role, able to hydrolyze 1,5-, 1,3- and 1,2-alpha-linkages not only in L-arabinofuranosyl oligosaccharides, but also in polysac-charides containing terminal non-reducing L-arabinofuranoses in side chains, like L-arabinan, arabinogalactan and arabinoxylan. The chain is Alpha-L-arabinofuranosidase B (abfB) from Aspergillus niger.